The following is a 97-amino-acid chain: MTKITSDDVRKVATLARLNLPEDLIDTYTSQLEKILGYVAQLEEVDTEDIPPTSRAVEVTNVLREDIIQETDIREDLINLAPNREGDFFRVPKILSE.

The protein belongs to the GatC family. As to quaternary structure, heterotrimer of A, B and C subunits.

It catalyses the reaction L-glutamyl-tRNA(Gln) + L-glutamine + ATP + H2O = L-glutaminyl-tRNA(Gln) + L-glutamate + ADP + phosphate + H(+). The catalysed reaction is L-aspartyl-tRNA(Asn) + L-glutamine + ATP + H2O = L-asparaginyl-tRNA(Asn) + L-glutamate + ADP + phosphate + 2 H(+). Its function is as follows. Allows the formation of correctly charged Asn-tRNA(Asn) or Gln-tRNA(Gln) through the transamidation of misacylated Asp-tRNA(Asn) or Glu-tRNA(Gln) in organisms which lack either or both of asparaginyl-tRNA or glutaminyl-tRNA synthetases. The reaction takes place in the presence of glutamine and ATP through an activated phospho-Asp-tRNA(Asn) or phospho-Glu-tRNA(Gln). This chain is Aspartyl/glutamyl-tRNA(Asn/Gln) amidotransferase subunit C, found in Prochlorococcus marinus (strain MIT 9211).